A 619-amino-acid polypeptide reads, in one-letter code: Sodium-dependent dopamine transporter (619 aa).

At 1–56 (MSKSKCSVGPMSSVVAPAKEPNAVGPREVELILVKEQNGVQLTNSTLINPPQTPVE) the chain is on the cytoplasmic side. Residues 57 to 95 (VQERETWSKKIDFLLSVIGFAVDLANVWRFPYLCYKNGG) traverse the membrane as a discontinuously helical segment. Na(+) is bound by residues glycine 75, alanine 77, valine 78, aspartate 79, and asparagine 82. Aspartate 79 is a dopamine binding site. 2 helical membrane passes run 96 to 127 (GAFLVPYLLFMVIAGMPLFYMELALGQFNREG) and 128 to 171 (AAGV…FSSF). Dopamine-binding residues include serine 149 and glycine 153. At 172–235 (TMDLPWIHCN…SRGIDDLGPP (64 aa)) the chain is on the extracellular side. Residues cysteine 180 and cysteine 189 are joined by a disulfide bond. Asparagine 181, asparagine 188, asparagine 196, and asparagine 204 each carry an N-linked (GlcNAc...) asparagine glycan. The next 2 helical transmembrane spans lie at 236–255 (RWQLTACLVLVIVLLYFSLW) and 256–286 (KGVKTSGKVVWITATMPYVVLTALLLRGVTL). Residues 287-305 (PGAMDGIRAYLSVDFYRLC) lie on the Extracellular side of the membrane. A discontinuously helical membrane pass occupies residues 306-334 (EASVWIDAATQVCFSLGVGFGVLIAFSSY). A chloride-binding site is contributed by glutamine 316. A dopamine-binding site is contributed by phenylalanine 319. Na(+) contacts are provided by serine 320 and asparagine 352. Serine 320 serves as a coordination point for chloride. Residues 335-375 (NKFTNNCYRDAIITTSINSLTSFSSGFVVFSFLGYMAQKHN) traverse the membrane as a helical segment. Serine 356 is a binding site for chloride. The Extracellular portion of the chain corresponds to 376–399 (VPIRDVATDGPGLIFIIYPEAIAT). 3 helical membrane-spanning segments follow: residues 400–441 (LPLS…QLLH), 442–465 (RHRELFTLGIVLATFLLSLFCVTN), and 466–498 (GGIYVFTLLDHFAAGTSILFGVLIEAIGVAWFY). Na(+) contacts are provided by leucine 417, aspartate 420, and serine 421. Dopamine is bound by residues serine 421 and alanine 422. The Cytoplasmic segment spans residues 499–515 (GVQQFSDDIKQMTGQRP). The chain crosses the membrane as a helical span at residues 516–541 (NLYWRLCWKLVSPCFLLYVVVVSIVT). Residues 542-552 (FRPPHYGAYIF) lie on the Extracellular side of the membrane. Residues 553 to 582 (PDWANALGWIIATSSMAMVPIYATYKFCSL) traverse the membrane as a helical segment. The interval 560 to 589 (GWIIATSSMAMVPIYATYKFCSLPGSFREK) is interaction with TGFB1I1. The Cytoplasmic portion of the chain corresponds to 583-619 (PGSFREKLAYAITPEKDRQLVDRGEVRQFTLRHWLLV).

Belongs to the sodium:neurotransmitter symporter (SNF) (TC 2.A.22) family. SLC6A3 subfamily. As to quaternary structure, monomer. Homooligomer; disulfide-linked. Interacts with PRKCABP and TGFB1I1. Interacts (via N-terminus) with SYNGR3 (via N-terminus). Interacts with SLC18A2. Interacts with TOR1A (ATP-bound); TOR1A regulates SLC6A3 subcellular location. Interacts with alpha-synuclein/SNCA. Interacts with SEPTIN4. In terms of tissue distribution, found in the substantia nigra and ventral tegmental dopamine neurons, in fibers of the medial forebrain bundle ascending into the striatum, and within dense fiber networks and varicosities in the dorsal and ventral striatum (at protein level). Lower expression in the cortex (at protein level). Absent from the corpus callosum. Expressed throughout the retina at postnatal day 8.

Its subcellular location is the cell membrane. It localises to the cell projection. It is found in the neuron projection. The protein resides in the axon. The enzyme catalyses dopamine(out) + chloride(out) + Na(+)(out) = dopamine(in) + chloride(in) + Na(+)(in). The catalysed reaction is (R)-noradrenaline(out) + chloride(out) + Na(+)(out) = (R)-noradrenaline(in) + chloride(in) + Na(+)(in). It carries out the reaction dopamine(out) + chloride(out) + 2 Na(+)(out) = dopamine(in) + chloride(in) + 2 Na(+)(in). With respect to regulation, inhibited by amphetamine, bupropion, cocaine and ritalin. Inhibited by zinc ions. Mediates sodium- and chloride-dependent transport of dopamine. Also mediates sodium- and chloride-dependent transport of norepinephrine (also known as noradrenaline). Regulator of light-dependent retinal hyaloid vessel regression, downstream of OPN5 signaling. The sequence is that of Sodium-dependent dopamine transporter (Slc6a3) from Mus musculus (Mouse).